Reading from the N-terminus, the 214-residue chain is MPDKKTLWMLNELEGFEKPKIKLEQYATSSELAVSMMEMIDETIGFEGKKLIDIGCGCGMLMTTAATMYELETVLGVDIDDEALKICSRNLETAEVQDRCELLQADILDPESDLPRGTFDVAVINPPFGTKNNAGIDMQFVQIGLQMVRPGGSVFSLHKSSTRDYILKNAKKWDGVGAECCAEMRWQLPATYKFHKQKAVDIAVDLIHFKKLDS.

Residues Q25, T28, G55, C58, D78, and 106 to 107 (DI) each bind S-adenosyl-L-methionine.

Belongs to the methyltransferase superfamily. PrmA family. In terms of assembly, heterodimer; heterodimerizes with TRMT112/C04H5.1.

It carries out the reaction adenosine in rRNA + S-adenosyl-L-methionine = N(6)-methyladenosine in rRNA + S-adenosyl-L-homocysteine + H(+). In terms of biological role, catalytic subunit of a heterodimer with TRMT112/C04H5.1, which specifically methylates the 6th position of adenine in position 1717 of 18S rRNA. The chain is rRNA N(6)-adenosine-methyltransferase metl-5 from Caenorhabditis elegans.